The chain runs to 129 residues: Histone H2A-III (129 aa).

The segment at methionine 1–alanine 22 is disordered. N-acetylserine is present on serine 2. At serine 2 the chain carries Phosphoserine. Lysine 6 is modified (N6-(2-hydroxyisobutyryl)lysine). An N6-acetyllysine mark is found at lysine 6 and lysine 10. The segment covering glutamine 7–serine 19 has biased composition (basic residues). The residue at position 10 (lysine 10) is an N6-(2-hydroxyisobutyryl)lysine; alternate. At lysine 10 the chain carries N6-lactoyllysine; alternate. Lysine 10 is modified (N6-succinyllysine). Residues lysine 14 and lysine 16 each participate in a glycyl lysine isopeptide (Lys-Gly) (interchain with G-Cter in ubiquitin) cross-link. Position 37 is an N6-(2-hydroxyisobutyryl)lysine; alternate (lysine 37). An N6-(2-hydroxyisobutyryl)lysine mark is found at lysine 75 and lysine 76. Residue lysine 96 is modified to N6-(2-hydroxyisobutyryl)lysine; alternate. Lysine 96 is subject to N6-succinyllysine. Lysine 96 bears the N6-glutaryllysine; alternate mark. Lysine 100 bears the N6-glutaryllysine mark. Glutamine 105 carries the N5-methylglutamine modification. An N6-(2-hydroxyisobutyryl)lysine; alternate modification is found at lysine 119. Lysine 119 and lysine 120 each carry N6-glutaryllysine; alternate. Lysine 120 participates in a covalent cross-link: Glycyl lysine isopeptide (Lys-Gly) (interchain with G-Cter in ubiquitin).

This sequence belongs to the histone H2A family. In terms of assembly, the nucleosome is a histone octamer containing two molecules each of H2A, H2B, H3 and H4 assembled in one H3-H4 heterotetramer and two H2A-H2B heterodimers. The octamer wraps approximately 147 bp of DNA. Monoubiquitination of Lys-120 (H2AK119Ub) gives a specific tag for epigenetic transcriptional repression. Following DNA double-strand breaks (DSBs), it is ubiquitinated through 'Lys-63' linkage of ubiquitin moieties, leading to the recruitment of repair proteins to sites of DNA damage. H2AK119Ub and ionizing radiation-induced 'Lys-63'-linked ubiquitination are distinct events. Post-translationally, phosphorylation on Ser-2 is enhanced during mitosis. Phosphorylation on Ser-2 directly represses transcription. In terms of processing, glutamine methylation at Gln-105 (H2AQ104me) by FBL is specifically dedicated to polymerase I. It is present at 35S ribosomal DNA locus and impairs binding of the FACT complex.

The protein localises to the nucleus. Its subcellular location is the chromosome. Functionally, core component of nucleosome. Nucleosomes wrap and compact DNA into chromatin, limiting DNA accessibility to the cellular machineries which require DNA as a template. Histones thereby play a central role in transcription regulation, DNA repair, DNA replication and chromosomal stability. DNA accessibility is regulated via a complex set of post-translational modifications of histones, also called histone code, and nucleosome remodeling. This chain is Histone H2A-III, found in Gallus gallus (Chicken).